Consider the following 178-residue polypeptide: CDP-archaeol synthase (178 aa).

A run of 4 helical transmembrane segments spans residues 3 to 23, 56 to 76, 91 to 111, and 136 to 156; these read LLLL…ANAV, FFGI…VILY, IILS…GSFI, and LLFA…LLVI.

Belongs to the CDP-archaeol synthase family. The cofactor is Mg(2+).

It localises to the cell membrane. The enzyme catalyses 2,3-bis-O-(geranylgeranyl)-sn-glycerol 1-phosphate + CTP + H(+) = CDP-2,3-bis-O-(geranylgeranyl)-sn-glycerol + diphosphate. It participates in membrane lipid metabolism; glycerophospholipid metabolism. In terms of biological role, catalyzes the formation of CDP-2,3-bis-(O-geranylgeranyl)-sn-glycerol (CDP-archaeol) from 2,3-bis-(O-geranylgeranyl)-sn-glycerol 1-phosphate (DGGGP) and CTP. This reaction is the third ether-bond-formation step in the biosynthesis of archaeal membrane lipids. This Methanococcus maripaludis (strain C5 / ATCC BAA-1333) protein is CDP-archaeol synthase.